A 237-amino-acid polypeptide reads, in one-letter code: Large ribosomal subunit protein uL1 (237 aa).

It belongs to the universal ribosomal protein uL1 family. In terms of assembly, part of the 50S ribosomal subunit.

Binds directly to 23S rRNA. The L1 stalk is quite mobile in the ribosome, and is involved in E site tRNA release. Functionally, protein L1 is also a translational repressor protein, it controls the translation of the L11 operon by binding to its mRNA. This is Large ribosomal subunit protein uL1 from Corynebacterium kroppenstedtii (strain DSM 44385 / JCM 11950 / CIP 105744 / CCUG 35717).